The following is a 402-amino-acid chain: Multidrug resistance protein MdtH (402 aa).

Over 1–12 the chain is Cytoplasmic; that stretch reads MSRVSQARNLGK. A helical membrane pass occupies residues 13-33; it reads YFLLIDNMLVVLGFFVVFPLI. Over 34–98 the chain is Periplasmic; sequence SIRFVDQMGW…GFATMGIAHE (65 aa). A helical membrane pass occupies residues 99-116; that stretch reads PWLLWFSCLLSGLGGTLF. At 117-138 the chain is on the cytoplasmic side; it reads DPPRSALVVKLIRPQQRGRFFS. Residues 139-159 form a helical membrane-spanning segment; sequence LLMMQDSAGAVIGALLGSWLL. Residues 160-164 lie on the Periplasmic side of the membrane; that stretch reads QYDFR. Residues 165–185 form a helical membrane-spanning segment; it reads LVCATGAVLFVLCAAFNAWLL. Over 186–213 the chain is Cytoplasmic; it reads PAWKLSTVRTPVREGMTRVMRDKRFVTY. Residues 214-234 form a helical membrane-spanning segment; that stretch reads VLTLAGYYMLAVQVMLMLPIM. Residues 235-243 are Periplasmic-facing; sequence VNDVAGAPS. The chain crosses the membrane as a helical span at residues 244-264; it reads AVKWMYAIEACLSLTLLYPIA. Over 265–276 the chain is Cytoplasmic; sequence RWSEKHFRLEHR. The helical transmembrane segment at 277 to 297 threads the bilayer; the sequence is LMAGLLIMSLSMMPVGMVSGL. The Periplasmic segment spans residues 298–299; sequence QQ. A helical membrane pass occupies residues 300–320; sequence LFNLICLFYIGSIIAEPARET. Topologically, residues 321-339 are cytoplasmic; sequence LSASLADARARGSYMGFSR. Residues 340–360 traverse the membrane as a helical segment; that stretch reads LGLAIGGAIGYIGGGWLFDLG. Residues 361 to 367 are Periplasmic-facing; sequence KSAHQPE. Residues 368-388 traverse the membrane as a helical segment; it reads LPWMMLGIIGIFTFLALGWQF. Residues 389–402 lie on the Cytoplasmic side of the membrane; that stretch reads SQKRAARRLLERDA.

The protein belongs to the major facilitator superfamily. DHA1 family. MdtH (TC 2.A.1.2.21) subfamily.

It localises to the cell inner membrane. Its function is as follows. Confers resistance to norfloxacin and enoxacin. This is Multidrug resistance protein MdtH from Escherichia coli O9:H4 (strain HS).